Consider the following 380-residue polypeptide: Glycogenin-2 (380 aa).

Leu10, Tyr16, and Arg95 together coordinate UDP. 12 residues coordinate UDP-alpha-D-glucose: Leu10, Tyr16, Arg95, Lys104, Asp120, Ala121, Asp122, Asn158, Thr159, Asp185, Asp188, and Gln189. Residues Asp120, Ala121, and Asp122 each coordinate UDP. Residue Asp120 participates in Mn(2+) binding. Asp122 contributes to the Mn(2+) binding site. 2 O-linked (Glc...) tyrosine glycosylation sites follow: Tyr230 and Tyr232. 3 residues coordinate UDP: His249, Gly252, and Lys255. Residue His249 participates in Mn(2+) binding. UDP-alpha-D-glucose contacts are provided by Gly252 and Lys255. The tract at residues 331–357 is disordered; it reads SVDRNASQKSTAEKHDIEKPTSKPQSA. Residues 341-351 are compositionally biased toward basic and acidic residues; that stretch reads TAEKHDIEKPT. A glycan (O-linked (Glc...) tyrosine) is linked at Tyr367.

Belongs to the glycosyltransferase 8 family. Glycogenin subfamily. Interacts with glycogen synthase GSY2. It depends on Mn(2+) as a cofactor.

It is found in the cytoplasm. It localises to the vacuole. It catalyses the reaction L-tyrosyl-[glycogenin] + UDP-alpha-D-glucose = alpha-D-glucosyl-L-tyrosyl-[glycogenin] + UDP + H(+). The enzyme catalyses [1,4-alpha-D-glucosyl](n)-L-tyrosyl-[glycogenin] + UDP-alpha-D-glucose = [1,4-alpha-D-glucosyl](n+1)-L-tyrosyl-[glycogenin] + UDP + H(+). In terms of biological role, self-glucosylating initiator of glycogen synthesis. It catalyzes the formation of a short alpha (1,4)-glucosyl chain covalently attached via a glucose 1-O-tyrosyl linkage to internal tyrosine residues and these chains act as primers for the elongation reaction catalyzed by glycogen synthase. Capable of transferring glucosyl residues to unbound acceptors such as free oligoglucans or oligoglucan derivatives. The sequence is that of Glycogenin-2 (GLG2) from Saccharomyces cerevisiae (strain YJM789) (Baker's yeast).